The sequence spans 172 residues: MQPQGAIFVALPHLGPILVSLLTRHRMIRWYDIPKKPPWCPPHKVLLAGWITIYFVMGYASYLVWKDLGGGFGRPLALPLGLYAVQLAVSWAVLIFFFAAHAHGLALLHMLLLYGLVVSTALIWHPINKLAAVLLLPYLAWLTVTASIAYHLWRDSLCPNHHQPLPMGEKRD.

The next 5 helical transmembrane spans lie at 3–23 (PQGA…SLLT), 45–65 (VLLA…YLVW), 80–100 (LGLY…FFAA), 104–124 (GLAL…ALIW), and 130–150 (LAAV…SIAY).

This sequence belongs to the TspO/BZRP family. As to quaternary structure, homotetramer. May also form homodimer. Expressed in erythrocytes (at protein level).

It localises to the endoplasmic reticulum membrane. The protein localises to the cell membrane. Cholesterol-binding protein involved in the redistribution of cholesterol from lipid droplets to the endoplasmic reticulum. Required to meet cholesterol demands during erythropoietic differentiation. May play a role in transport processes at the plasma membrane of erythrocytes, including regulating VDAC-mediated ATP export, and import of the heme precursors protoporphyrin IX and 5-aminolevulinic acid. The polypeptide is Translocator protein 2 (Canis lupus familiaris (Dog)).